Here is a 64-residue protein sequence, read N- to C-terminus: Prokaryotic ubiquitin-like protein Pup (64 aa).

Residues 1-11 (MAQEQTKRGGG) are compositionally biased toward basic and acidic residues. The segment at 1–37 (MAQEQTKRGGGGDDEDDFASSTAAGQERREKLAEDTD) is disordered. Positions 21–58 (STAAGQERREKLAEDTDDLLDEIDDVLEENAEDFVRAY) are ARC ATPase binding. Residues 24–52 (AGQERREKLAEDTDDLLDEIDDVLEENAE) are a coiled coil. Residue Q64 is modified to Deamidated glutamine. Q64 participates in a covalent cross-link: Isoglutamyl lysine isopeptide (Gln-Lys) (interchain with K-? in acceptor proteins).

Belongs to the prokaryotic ubiquitin-like protein family. In terms of assembly, strongly interacts with the proteasome-associated ATPase ARC through a hydrophobic interface; the interacting region of Pup lies in its C-terminal half. There is one Pup binding site per ARC hexamer ring. In terms of processing, is modified by deamidation of its C-terminal glutamine to glutamate by the deamidase Dop, a prerequisite to the subsequent pupylation process.

It functions in the pathway protein degradation; proteasomal Pup-dependent pathway. Its function is as follows. Protein modifier that is covalently attached to lysine residues of substrate proteins, thereby targeting them for proteasomal degradation. The tagging system is termed pupylation. The polypeptide is Prokaryotic ubiquitin-like protein Pup (Mycolicibacterium paratuberculosis (strain ATCC BAA-968 / K-10) (Mycobacterium paratuberculosis)).